Here is a 330-residue protein sequence, read N- to C-terminus: Ribosomal RNA small subunit methyltransferase H (330 aa).

Residues 51 to 53, D70, D118, and Q125 each bind S-adenosyl-L-methionine; that span reads GGH. The segment at 276-330 is disordered; the sequence is STDSTPPGLPVPLPDRQPELRLLTRGAELPTEQETAANPRAASARLRAAERTREP. Residues 311–321 show a composition bias toward low complexity; sequence AANPRAASARL.

It belongs to the methyltransferase superfamily. RsmH family.

The protein localises to the cytoplasm. The enzyme catalyses cytidine(1402) in 16S rRNA + S-adenosyl-L-methionine = N(4)-methylcytidine(1402) in 16S rRNA + S-adenosyl-L-homocysteine + H(+). In terms of biological role, specifically methylates the N4 position of cytidine in position 1402 (C1402) of 16S rRNA. This chain is Ribosomal RNA small subunit methyltransferase H, found in Thermobifida fusca (strain YX).